The primary structure comprises 125 residues: Histone H1-like protein Hc1 (125 aa).

Residues 98–125 (TKAKVKPTKKAAPKTKVKTAKKTRSTKK) are disordered. A compositionally biased stretch (basic residues) spans 100–125 (AKVKPTKKAAPKTKVKTAKKTRSTKK).

Belongs to the histone H1/H5 family. HCT subfamily.

In terms of biological role, might have a role analogous to that of eukaryotic histone proteins. The protein is Histone H1-like protein Hc1 (hctA) of Chlamydia trachomatis serovar L2 (strain ATCC VR-902B / DSM 19102 / 434/Bu).